A 390-amino-acid chain; its full sequence is Aspergillopepsin-1 (390 aa).

An N-terminal signal peptide occupies residues 1-19 (MVNTSLLAALTAYAVAVSA). The propeptide at 20-67 (APTAPQVKGFSVNQVAVPKGVYRHPAAQLAKAYGKYHATVPTQVAAAA) is activation peptide. An O-linked (Man...) threonine glycan is attached at Thr70. The Peptidase A1 domain occupies 84 to 387 (YITQVTVGDD…DASGPRLGFA (304 aa)). Residues Asp100 and Asp281 contribute to the active site.

Belongs to the peptidase A1 family.

The protein localises to the secreted. It carries out the reaction Hydrolysis of proteins with broad specificity. Generally favors hydrophobic residues in P1 and P1', but also accepts Lys in P1, which leads to activation of trypsinogen. Does not clot milk.. Inhibited by the microbial peptide pepstatin. In terms of biological role, secreted aspartic endopeptidase that allows assimilation of proteinaceous substrates. The scissile peptide bond is attacked by a nucleophilic water molecule activated by two aspartic residues in the active site. Shows a broad primary substrate specificity. Favors hydrophobic residues at the P1 and P1' positions, but also accepts a lysine residue in the P1 position, leading to the activation of trypsinogen and chymotrypsinogen A. The chain is Aspergillopepsin-1 (pepA) from Aspergillus oryzae (Yellow koji mold).